Reading from the N-terminus, the 316-residue chain is Probable cell division protein WhiA (316 aa).

Positions 275 to 309 (TLKELGEMVSSGKISKSGINHRLRKLDEIAEQLRS) form a DNA-binding region, H-T-H motif.

Belongs to the WhiA family.

Functionally, involved in cell division and chromosome segregation. The sequence is that of Probable cell division protein WhiA from Bacillus licheniformis (strain ATCC 14580 / DSM 13 / JCM 2505 / CCUG 7422 / NBRC 12200 / NCIMB 9375 / NCTC 10341 / NRRL NRS-1264 / Gibson 46).